The primary structure comprises 941 residues: Translation initiation factor IF-2 (941 aa).

The segment covering 170–209 (DAQKAEVDAQKAEAEKPVEVKADESAIEEKKRVAAEESKK) has biased composition (basic and acidic residues). Disordered stretches follow at residues 170 to 228 (DAQK…KAAA) and 252 to 351 (RAIK…SNFQ). Residues 256 to 269 (APEPVAPVAKPAAE) are compositionally biased toward low complexity. Basic and acidic residues predominate over residues 271-297 (TLHKPADKKPGEKKDEKKPAVTADKKS). Residues 299 to 308 (KSANVSSTWQ) are compositionally biased toward polar residues. Positions 441-610 (PRAPVVTVMG…LLQAEVLELK (170 aa)) constitute a tr-type G domain. A G1 region spans residues 450–457 (GHVDHGKT). 450 to 457 (GHVDHGKT) is a GTP binding site. The segment at 475–479 (GITQH) is G2. Positions 496-499 (DTPG) are G3. Residues 496–500 (DTPGH) and 550–553 (NKID) contribute to the GTP site. Residues 550–553 (NKID) are G4. Positions 586-588 (SAK) are G5.

Belongs to the TRAFAC class translation factor GTPase superfamily. Classic translation factor GTPase family. IF-2 subfamily.

The protein resides in the cytoplasm. One of the essential components for the initiation of protein synthesis. Protects formylmethionyl-tRNA from spontaneous hydrolysis and promotes its binding to the 30S ribosomal subunits. Also involved in the hydrolysis of GTP during the formation of the 70S ribosomal complex. The polypeptide is Translation initiation factor IF-2 (Herminiimonas arsenicoxydans).